The chain runs to 244 residues: Phosphoadenosine 5'-phosphosulfate reductase (244 aa).

Catalysis depends on Cys239, which acts as the Nucleophile; cysteine thiosulfonate intermediate.

Belongs to the PAPS reductase family. CysH subfamily.

It is found in the cytoplasm. The enzyme catalyses [thioredoxin]-disulfide + sulfite + adenosine 3',5'-bisphosphate + 2 H(+) = [thioredoxin]-dithiol + 3'-phosphoadenylyl sulfate. It participates in sulfur metabolism; hydrogen sulfide biosynthesis; sulfite from sulfate: step 3/3. Functionally, catalyzes the formation of sulfite from phosphoadenosine 5'-phosphosulfate (PAPS) using thioredoxin as an electron donor. This chain is Phosphoadenosine 5'-phosphosulfate reductase, found in Yersinia enterocolitica serotype O:8 / biotype 1B (strain NCTC 13174 / 8081).